We begin with the raw amino-acid sequence, 270 residues long: MSVEQSLLGKETQYPTSYQPDVLFPIARAQSREKYAHIEGITQGKDWWHVFEISWLNAHGIPQVAIGRITLPASSPNLIESKSLKLYFNSLNFTQFDSTQSFIETVEKDLSAAAGAKVELTLFQVDDLEISKPQGICIDDLMPERLEQHPDATLLKLDESGEEIEVELYSHLLRSNCPVTGQPDWGTVFIRFKGKKPCYRSLLAYIISYRQHNGFHEQCVEQIFADIWQNLQPEKLMVYATYTRRGGLDINPCRVSDLTWMPKPIRLARQ.

79–81 lines the substrate pocket; that stretch reads IES. Residue 81–82 participates in NADPH binding; that stretch reads SK. Cys-177 (thioimide intermediate) is an active-site residue. Asp-184 functions as the Proton donor in the catalytic mechanism. 216–217 contacts substrate; that stretch reads HE. Position 245 to 246 (245 to 246) interacts with NADPH; the sequence is RG.

It belongs to the GTP cyclohydrolase I family. QueF type 2 subfamily. In terms of assembly, homodimer.

The protein localises to the cytoplasm. It catalyses the reaction 7-aminomethyl-7-carbaguanine + 2 NADP(+) = 7-cyano-7-deazaguanine + 2 NADPH + 3 H(+). Its pathway is tRNA modification; tRNA-queuosine biosynthesis. Catalyzes the NADPH-dependent reduction of 7-cyano-7-deazaguanine (preQ0) to 7-aminomethyl-7-deazaguanine (preQ1). This chain is NADPH-dependent 7-cyano-7-deazaguanine reductase, found in Acinetobacter baumannii (strain ACICU).